The following is a 272-amino-acid chain: Putative pyruvate, phosphate dikinase regulatory protein (272 aa).

Residue 149 to 156 participates in ADP binding; it reads GVSRTSKT.

This sequence belongs to the pyruvate, phosphate/water dikinase regulatory protein family. PDRP subfamily.

The catalysed reaction is N(tele)-phospho-L-histidyl/L-threonyl-[pyruvate, phosphate dikinase] + ADP = N(tele)-phospho-L-histidyl/O-phospho-L-threonyl-[pyruvate, phosphate dikinase] + AMP + H(+). It catalyses the reaction N(tele)-phospho-L-histidyl/O-phospho-L-threonyl-[pyruvate, phosphate dikinase] + phosphate + H(+) = N(tele)-phospho-L-histidyl/L-threonyl-[pyruvate, phosphate dikinase] + diphosphate. Functionally, bifunctional serine/threonine kinase and phosphorylase involved in the regulation of the pyruvate, phosphate dikinase (PPDK) by catalyzing its phosphorylation/dephosphorylation. The chain is Putative pyruvate, phosphate dikinase regulatory protein from Lactiplantibacillus plantarum (strain ATCC BAA-793 / NCIMB 8826 / WCFS1) (Lactobacillus plantarum).